The following is an 843-amino-acid chain: Protein P (843 aa).

The interval 1-177 (MPLSYPHFRK…FCGSPYSWEQ (177 aa)) is terminal protein domain (TP). The spacer stretch occupies residues 178–346 (ELQHGSTSIN…YCLSHIINLL (169 aa)). Disordered stretches follow at residues 202–221 (SGIL…FQQS) and 285–310 (TNPS…VPPG). Positions 347–690 (EDWGPCYEHG…YMNLYPVARQ (344 aa)) are polymerase/reverse transcriptase domain (RT). Residues 357 to 600 (QHHIRTPRTP…YTLNFMGYVI (244 aa)) form the Reverse transcriptase domain. Mg(2+) is bound by residues Asp-429, Asp-551, and Asp-552.

Belongs to the hepadnaviridae P protein family.

The enzyme catalyses DNA(n) + a 2'-deoxyribonucleoside 5'-triphosphate = DNA(n+1) + diphosphate. It carries out the reaction Endonucleolytic cleavage to 5'-phosphomonoester.. Its activity is regulated as follows. Activated by host HSP70 and HSP40 in vitro to be able to bind the epsilon loop of the pgRNA. Because deletion of the RNase H region renders the protein partly chaperone-independent, the chaperones may be needed indirectly to relieve occlusion of the RNA-binding site by this domain. Inhibited by several reverse-transcriptase inhibitors: Lamivudine, Adefovir and Entecavir. Its function is as follows. Multifunctional enzyme that converts the viral RNA genome into dsDNA in viral cytoplasmic capsids. This enzyme displays a DNA polymerase activity that can copy either DNA or RNA templates, and a ribonuclease H (RNase H) activity that cleaves the RNA strand of RNA-DNA heteroduplexes in a partially processive 3'- to 5'-endonucleasic mode. Neo-synthesized pregenomic RNA (pgRNA) are encapsidated together with the P protein, and reverse-transcribed inside the nucleocapsid. Initiation of reverse-transcription occurs first by binding the epsilon loop on the pgRNA genome, and is initiated by protein priming, thereby the 5'-end of (-)DNA is covalently linked to P protein. Partial (+)DNA is synthesized from the (-)DNA template and generates the relaxed circular DNA (RC-DNA) genome. After budding and infection, the RC-DNA migrates in the nucleus, and is converted into a plasmid-like covalently closed circular DNA (cccDNA). The activity of P protein does not seem to be necessary for cccDNA generation, and is presumably released from (+)DNA by host nuclear DNA repair machinery. This chain is Protein P, found in Hepatitis B virus genotype F1 (isolate Argentina/sa11/2000) (HBV-F).